A 301-amino-acid chain; its full sequence is Possible hemolysin C (301 aa).

2 consecutive CBS domains span residues 79–141 and 144–201; these read MVPR…NFRL and LIRK…IDDE.

This sequence belongs to the UPF0053 family. Hemolysin C subfamily.

The protein is Possible hemolysin C (tlyC) of Rickettsia bellii (strain RML369-C).